The sequence spans 450 residues: Tubulin beta-1 chain (450 aa).

Residues glutamine 11, glutamate 69, serine 138, glycine 142, threonine 143, glycine 144, asparagine 204, and asparagine 226 each contribute to the GTP site. Position 69 (glutamate 69) interacts with Mg(2+). The segment at 426-450 (QDATADEDEYGEEEGDEEEYGQHDI) is disordered. A compositionally biased stretch (acidic residues) spans 429–444 (TADEDEYGEEEGDEEE).

Belongs to the tubulin family. As to quaternary structure, dimer of alpha and beta chains. A typical microtubule is a hollow water-filled tube with an outer diameter of 25 nm and an inner diameter of 15 nM. Alpha-beta heterodimers associate head-to-tail to form protofilaments running lengthwise along the microtubule wall with the beta-tubulin subunit facing the microtubule plus end conferring a structural polarity. Microtubules usually have 13 protofilaments but different protofilament numbers can be found in some organisms and specialized cells. Requires Mg(2+) as cofactor.

It localises to the cytoplasm. The protein resides in the cytoskeleton. Its function is as follows. Tubulin is the major constituent of microtubules, a cylinder consisting of laterally associated linear protofilaments composed of alpha- and beta-tubulin heterodimers. Microtubules grow by the addition of GTP-tubulin dimers to the microtubule end, where a stabilizing cap forms. Below the cap, tubulin dimers are in GDP-bound state, owing to GTPase activity of alpha-tubulin. The polypeptide is Tubulin beta-1 chain (TUBB1) (Pisum sativum (Garden pea)).